The following is a 190-amino-acid chain: uncharacterized protein (190 aa).

The chain crosses the membrane as a helical span at residues 1–21 (MLVMSITFSFVAVALLVYFYV). Residues 103-114 (REEVCARPEHRS) show a composition bias toward basic and acidic residues. Positions 103 to 130 (REEVCARPEHRSAPSRAGSSAAKPTPTK) are disordered.

This sequence to B.burgdorferi BB0265.

It localises to the membrane. This is an uncharacterized protein from Treponema pallidum (strain Nichols).